The following is a 24-amino-acid chain: Cytochrome c oxidase subunit 7A2, mitochondrial (24 aa).

The segment covering 1–13 has biased composition (basic and acidic residues); sequence FENKVPEKQKLFQ. A disordered region spans residues 1–24; that stretch reads FENKVPEKQKLFQEDNGIPVHLKG. N6-acetyllysine is present on lysine 10.

Belongs to the cytochrome c oxidase VIIa family. Component of the cytochrome c oxidase (complex IV, CIV), a multisubunit enzyme composed of 14 subunits. The complex is composed of a catalytic core of 3 subunits MT-CO1, MT-CO2 and MT-CO3, encoded in the mitochondrial DNA, and 11 supernumerary subunits COX4I, COX5A, COX5B, COX6A, COX6B, COX6C, COX7A, COX7B, COX7C, COX8 and NDUFA4, which are encoded in the nuclear genome. The complex exists as a monomer or a dimer and forms supercomplexes (SCs) in the inner mitochondrial membrane with NADH-ubiquinone oxidoreductase (complex I, CI) and ubiquinol-cytochrome c oxidoreductase (cytochrome b-c1 complex, complex III, CIII), resulting in different assemblies (supercomplex SCI(1)III(2)IV(1) and megacomplex MCI(2)III(2)IV(2)). Interacts with PET100.

The protein resides in the mitochondrion inner membrane. It participates in energy metabolism; oxidative phosphorylation. Component of the cytochrome c oxidase, the last enzyme in the mitochondrial electron transport chain which drives oxidative phosphorylation. The respiratory chain contains 3 multisubunit complexes succinate dehydrogenase (complex II, CII), ubiquinol-cytochrome c oxidoreductase (cytochrome b-c1 complex, complex III, CIII) and cytochrome c oxidase (complex IV, CIV), that cooperate to transfer electrons derived from NADH and succinate to molecular oxygen, creating an electrochemical gradient over the inner membrane that drives transmembrane transport and the ATP synthase. Cytochrome c oxidase is the component of the respiratory chain that catalyzes the reduction of oxygen to water. Electrons originating from reduced cytochrome c in the intermembrane space (IMS) are transferred via the dinuclear copper A center (CU(A)) of subunit 2 and heme A of subunit 1 to the active site in subunit 1, a binuclear center (BNC) formed by heme A3 and copper B (CU(B)). The BNC reduces molecular oxygen to 2 water molecules using 4 electrons from cytochrome c in the IMS and 4 protons from the mitochondrial matrix. The protein is Cytochrome c oxidase subunit 7A2, mitochondrial (COX7A2) of Ovis aries (Sheep).